The following is a 199-amino-acid chain: Potassium-transporting ATPase KdpC subunit (199 aa).

Residues 7–27 (PALVMTAALCLITGIIYPGLI) form a helical membrane-spanning segment.

It belongs to the KdpC family. In terms of assembly, the system is composed of three essential subunits: KdpA, KdpB and KdpC.

It is found in the cell inner membrane. Part of the high-affinity ATP-driven potassium transport (or Kdp) system, which catalyzes the hydrolysis of ATP coupled with the electrogenic transport of potassium into the cytoplasm. This subunit acts as a catalytic chaperone that increases the ATP-binding affinity of the ATP-hydrolyzing subunit KdpB by the formation of a transient KdpB/KdpC/ATP ternary complex. The polypeptide is Potassium-transporting ATPase KdpC subunit (Gemmatimonas aurantiaca (strain DSM 14586 / JCM 11422 / NBRC 100505 / T-27)).